Consider the following 382-residue polypeptide: 1-deoxy-D-xylulose 5-phosphate reductoisomerase (382 aa).

NADPH is bound by residues Thr10, Gly11, Ser12, Ile13, Gly36, and Asn122. Residue Lys123 participates in 1-deoxy-D-xylulose 5-phosphate binding. An NADPH-binding site is contributed by Glu124. Position 148 (Asp148) interacts with Mn(2+). The 1-deoxy-D-xylulose 5-phosphate site is built by Ser149, Glu150, Ser174, and His197. Glu150 serves as a coordination point for Mn(2+). Gly203 contacts NADPH. Residues Ser210, Asn215, Lys216, and Glu219 each coordinate 1-deoxy-D-xylulose 5-phosphate. Glu219 provides a ligand contact to Mn(2+).

Belongs to the DXR family. It depends on Mg(2+) as a cofactor. The cofactor is Mn(2+).

The catalysed reaction is 2-C-methyl-D-erythritol 4-phosphate + NADP(+) = 1-deoxy-D-xylulose 5-phosphate + NADPH + H(+). The protein operates within isoprenoid biosynthesis; isopentenyl diphosphate biosynthesis via DXP pathway; isopentenyl diphosphate from 1-deoxy-D-xylulose 5-phosphate: step 1/6. Functionally, catalyzes the NADPH-dependent rearrangement and reduction of 1-deoxy-D-xylulose-5-phosphate (DXP) to 2-C-methyl-D-erythritol 4-phosphate (MEP). The protein is 1-deoxy-D-xylulose 5-phosphate reductoisomerase of Chlorobium phaeobacteroides (strain BS1).